The following is a 474-amino-acid chain: UDP-N-acetylmuramate--L-alanine ligase (474 aa).

Residue Gly-108–Thr-114 coordinates ATP.

Belongs to the MurCDEF family.

It is found in the cytoplasm. The catalysed reaction is UDP-N-acetyl-alpha-D-muramate + L-alanine + ATP = UDP-N-acetyl-alpha-D-muramoyl-L-alanine + ADP + phosphate + H(+). It functions in the pathway cell wall biogenesis; peptidoglycan biosynthesis. Cell wall formation. This chain is UDP-N-acetylmuramate--L-alanine ligase, found in Chloroflexus aggregans (strain MD-66 / DSM 9485).